The sequence spans 368 residues: Peptide chain release factor 2 (368 aa).

Gln-250 is subject to N5-methylglutamine.

This sequence belongs to the prokaryotic/mitochondrial release factor family. Methylated by PrmC. Methylation increases the termination efficiency of RF2.

The protein localises to the cytoplasm. Functionally, peptide chain release factor 2 directs the termination of translation in response to the peptide chain termination codons UGA and UAA. This chain is Peptide chain release factor 2, found in Rickettsia conorii (strain ATCC VR-613 / Malish 7).